Reading from the N-terminus, the 59-residue chain is Large ribosomal subunit protein uL30 (59 aa).

The protein belongs to the universal ribosomal protein uL30 family. Part of the 50S ribosomal subunit.

The protein is Large ribosomal subunit protein uL30 of Rhodococcus jostii (strain RHA1).